Consider the following 504-residue polypeptide: ATP synthase subunit alpha (504 aa).

Position 170–177 (170–177 (GDRQTGKT)) interacts with ATP.

Belongs to the ATPase alpha/beta chains family. As to quaternary structure, F-type ATPases have 2 components, CF(1) - the catalytic core - and CF(0) - the membrane proton channel. CF(1) has five subunits: alpha(3), beta(3), gamma(1), delta(1), epsilon(1). CF(0) has four main subunits: a(1), b(1), b'(1) and c(9-12).

It is found in the cellular thylakoid membrane. It catalyses the reaction ATP + H2O + 4 H(+)(in) = ADP + phosphate + 5 H(+)(out). In terms of biological role, produces ATP from ADP in the presence of a proton gradient across the membrane. The alpha chain is a regulatory subunit. The protein is ATP synthase subunit alpha of Prochlorococcus marinus (strain NATL2A).